The following is a 630-amino-acid chain: MDFPTRFDVIVIGGGHAGTEAALAAARMGVKTLLLTHNVETLGQMSCNPAIGGIGKSHLVKEIDALGGAMAEATDKGGIQFRILNSRKGPAVRATRAQADRVLYKAAIRHTLENQPNLWIFQQACDDLIVEQDQVRGVVTQMGLRFHADNVVLTTGTFLGGLIHIGLENYSGGRAGDPPSIALARRLRELPLRVGRLKTGTPPRIDGRSVDFSVMTEQPGDTPIPVMSFLGSKEQHPEQVSCWITHTNARTHEIIAANLDRSPMYSGVIEGIGPRYCPSIEDKIHRFADKESHQVFLEPEGLTTHELYPNGISTSLPFDVQLQIVRSIRGMENAHIVRPGYAIEYDFFDPRDLRYSLETKVIGGLFFAGQINGTTGYEEAGAQGLLAGANAALRSQGKDSWCPRRDEAYIGVLVDDLITLGTQEPYRMFTSRAEYRLILREDNADLRLTEKGRELGLVDDRRWAAFEAKREGIEREEQRLKSTWVRPNTPQGDAIAERFGTPLTHEYNLLNLLSRPEIDYAGLVEITGNAVDNPQVAEQVEIRTKYAGYIDRQQEEISRLRASEDTRLPVDIDYLGISGLSKEIQNKLNQARPETLGQASRIPGVTPAAISLLLIHLKKRASGRQLEQSA.

13-18 (GGGHAG) lines the FAD pocket. 273-287 (GPRYCPSIEDKIHRF) provides a ligand contact to NAD(+).

Belongs to the MnmG family. In terms of assembly, homodimer. Heterotetramer of two MnmE and two MnmG subunits. FAD serves as cofactor.

It is found in the cytoplasm. Functionally, NAD-binding protein involved in the addition of a carboxymethylaminomethyl (cmnm) group at the wobble position (U34) of certain tRNAs, forming tRNA-cmnm(5)s(2)U34. The sequence is that of tRNA uridine 5-carboxymethylaminomethyl modification enzyme MnmG from Pseudomonas aeruginosa (strain ATCC 15692 / DSM 22644 / CIP 104116 / JCM 14847 / LMG 12228 / 1C / PRS 101 / PAO1).